The sequence spans 124 residues: BLOC-1-related complex subunit 8 (124 aa).

The disordered stretch occupies residues 102 to 124 (SSSQGRSAVINPNETPAHTSVTP).

This sequence belongs to the BORCS8 family.

The protein resides in the lysosome membrane. Its function is as follows. As part of a BORC-like complex, it may play a role in the movement and localization of lysosomes at the cell periphery. Associated with the cytosolic face of lysosomes, this complex may couple lysosomes to microtubule plus-end-directed kinesin motors, driving lysosome movement toward the cell periphery. The polypeptide is BLOC-1-related complex subunit 8 (Danio rerio (Zebrafish)).